A 171-amino-acid chain; its full sequence is PIDD1 alternative open reading frame protein (171 aa).

2 disordered regions span residues 1 to 22 (MSGL…RAGG) and 76 to 156 (ILAS…LCPA). The segment covering 84-99 (GPSAAGGHPGPAASEP) has biased composition (low complexity).

Interacts with calpain-2 catalytic subunit CAPN2. Cleaved in vitro following UV irradiation to induce caspase-mediated apoptosis and this cleavage is inhibited by a broad-spectrum caspase inhibitor.

It is found in the cytoplasm. The protein resides in the cytoskeleton. The protein is PIDD1 alternative open reading frame protein of Homo sapiens (Human).